An 818-amino-acid chain; its full sequence is Elongation factor G, mitochondrial (818 aa).

A mitochondrion-targeting transit peptide spans 1–23 (MFLGRAASRTCRHSQPLRVAARA). The tract at residues 67-96 (MASTATATKPTEEASSSDQPPAPAHKLTDN) is disordered. Residues 69-85 (STATATKPTEEASSSDQ) are compositionally biased toward polar residues. The 289-residue stretch at 102–390 (TFQRNIGISA…GVCEYLPNPS (289 aa)) folds into the tr-type G domain. GTP-binding positions include 111–118 (AHIDSGKT), 188–192 (DTPGH), and 242–245 (NKMD).

This sequence belongs to the TRAFAC class translation factor GTPase superfamily. Classic translation factor GTPase family. EF-G/EF-2 subfamily.

The protein resides in the mitochondrion. It functions in the pathway protein biosynthesis; polypeptide chain elongation. In terms of biological role, mitochondrial GTPase that catalyzes the GTP-dependent ribosomal translocation step during translation elongation. During this step, the ribosome changes from the pre-translocational (PRE) to the post-translocational (POST) state as the newly formed A-site-bound peptidyl-tRNA and P-site-bound deacylated tRNA move to the P and E sites, respectively. Catalyzes the coordinated movement of the two tRNA molecules, the mRNA and conformational changes in the ribosome. In Coprinopsis cinerea (strain Okayama-7 / 130 / ATCC MYA-4618 / FGSC 9003) (Inky cap fungus), this protein is Elongation factor G, mitochondrial.